A 358-amino-acid polypeptide reads, in one-letter code: Alanine racemase (358 aa).

K35 serves as the catalytic Proton acceptor; specific for D-alanine. K35 is subject to N6-(pyridoxal phosphate)lysine. R130 serves as a coordination point for substrate. Y255 acts as the Proton acceptor; specific for L-alanine in catalysis. M303 is a binding site for substrate.

Belongs to the alanine racemase family. Pyridoxal 5'-phosphate serves as cofactor.

The catalysed reaction is L-alanine = D-alanine. It participates in amino-acid biosynthesis; D-alanine biosynthesis; D-alanine from L-alanine: step 1/1. Catalyzes the interconversion of L-alanine and D-alanine. May also act on other amino acids. This Shewanella sp. (strain MR-4) protein is Alanine racemase (alr).